A 170-amino-acid chain; its full sequence is RNA pyrophosphohydrolase (170 aa).

The Nudix hydrolase domain maps to 6–149; it reads GFRPNVGIVI…KRDVYRRALK (144 aa). The short motif at 38–59 is the Nudix box element; it reads GGIDDGETPEQAMYRELYEEVG.

Belongs to the Nudix hydrolase family. RppH subfamily. It depends on a divalent metal cation as a cofactor.

Its function is as follows. Accelerates the degradation of transcripts by removing pyrophosphate from the 5'-end of triphosphorylated RNA, leading to a more labile monophosphorylated state that can stimulate subsequent ribonuclease cleavage. In Aliivibrio salmonicida (strain LFI1238) (Vibrio salmonicida (strain LFI1238)), this protein is RNA pyrophosphohydrolase.